The following is a 142-amino-acid chain: COA8 family protein CBG23705, mitochondrial (142 aa).

This sequence belongs to the COA8 family.

It localises to the mitochondrion inner membrane. Its function is as follows. May be required for cytochrome c complex (COX) assembly and function, COX being the terminal component of the mitochondrial respiratory chain. The chain is COA8 family protein CBG23705, mitochondrial from Caenorhabditis briggsae.